A 289-amino-acid chain; its full sequence is MARTTYKETALDEGDQLEIVHFIGGGDRSDPQPADDPFTVAGRVFSSRLLVGTGKYRDFEETARAIEASGAEIVTVAVRRVNVSDPSQPMLVDYVDPAKYTYLPNTAGCFTADEAVRTLRLAREAGGWSLVKLEVLGDQRTLYPNMAETFLAAEALIRDGFEVMVYCADDPIAAKRLEDMGCVAIMPLGSLIGSGLGIINPYTIRLIKESVSVPVLVDAGVGTASDAAVAMELGCDGVLMNTAIAQAKDPVRMARAMRLAIEAGRLSYQAGRMPRKLYADPSSPLAGLI.

Catalysis depends on Lys132, which acts as the Schiff-base intermediate with DXP. 1-deoxy-D-xylulose 5-phosphate contacts are provided by residues Gly193, 219-220 (AG), and 241-242 (NT).

Belongs to the ThiG family. In terms of assembly, homotetramer. Forms heterodimers with either ThiH or ThiS.

The protein localises to the cytoplasm. It catalyses the reaction [ThiS sulfur-carrier protein]-C-terminal-Gly-aminoethanethioate + 2-iminoacetate + 1-deoxy-D-xylulose 5-phosphate = [ThiS sulfur-carrier protein]-C-terminal Gly-Gly + 2-[(2R,5Z)-2-carboxy-4-methylthiazol-5(2H)-ylidene]ethyl phosphate + 2 H2O + H(+). The protein operates within cofactor biosynthesis; thiamine diphosphate biosynthesis. Catalyzes the rearrangement of 1-deoxy-D-xylulose 5-phosphate (DXP) to produce the thiazole phosphate moiety of thiamine. Sulfur is provided by the thiocarboxylate moiety of the carrier protein ThiS. In vitro, sulfur can be provided by H(2)S. The sequence is that of Thiazole synthase from Rhodospirillum rubrum (strain ATCC 11170 / ATH 1.1.1 / DSM 467 / LMG 4362 / NCIMB 8255 / S1).